The sequence spans 314 residues: 2,3,4,5-tetrahydropyridine-2,6-dicarboxylate N-succinyltransferase (314 aa).

Mg(2+) contacts are provided by Asp163 and Glu180. The active-site Acyl-anhydride intermediate is the Glu196. Succinyl-CoA-binding positions include Arg198, Gly213, Ser216, Ala239, 254–255 (EA), Gly262, Lys274, and 287–290 (RRNS).

The protein belongs to the type 2 tetrahydrodipicolinate N-succinyltransferase family. As to quaternary structure, homotrimer.

It is found in the cytoplasm. It catalyses the reaction (S)-2,3,4,5-tetrahydrodipicolinate + succinyl-CoA + H2O = (S)-2-succinylamino-6-oxoheptanedioate + CoA. It participates in amino-acid biosynthesis; L-lysine biosynthesis via DAP pathway; LL-2,6-diaminopimelate from (S)-tetrahydrodipicolinate (succinylase route): step 1/3. Catalyzes the conversion of the cyclic tetrahydrodipicolinate (THDP) into the acyclic N-succinyl-L-2-amino-6-oxopimelate using succinyl-CoA. This Mycolicibacterium smegmatis (strain ATCC 700084 / mc(2)155) (Mycobacterium smegmatis) protein is 2,3,4,5-tetrahydropyridine-2,6-dicarboxylate N-succinyltransferase.